The chain runs to 887 residues: Transportin-2 (887 aa).

HEAT repeat units lie at residues 9–36, 41–79, 88–121, 127–164, 171–201, 214–241, 253–280, 296–386, 394–422, 434–461, 475–508, 516–549, 557–595, 603–654, 665–696, 704–737, 745–780, 788–821, 830–861, and 864–884; these read GLQQVLQLLKDSQSPNTATQRIVQDKLK, FPDFNNYLIFVLTRLKSEDEPTRSLSGLILKNNVKAHYQ, FIKQECLNNIGDASSLIRATIGILITTIASKGEL, LLPQLCNLLNSEDYNTCEGAFGALQKICEDSSELLDSD, NIMIPKFLQFFKHCSPKIRSHAIACVNQFIM, FIEHLFALAVDDDPEVRKNVCRALVMLL, HSIIQYMLQRTQDHDENVALEACEFWLT, VQLI…LANV, HLLPLLKGLLFHPEWVVKESGILVLGAIA, PELIPHLIQCLSDKKALVRSIACWTLSR, LKPLMTELLKRILDGNKRVQEAACSAFATLEEEA, LSYILDTLVFAFGKYQHKNLLILYDAIGTLADSV, EYIQKLMPPLIQKWNELKDEDKDLFPLLECLSSVATALQ, EPVY…GLGG, IMTLLFQCMQDSMPEVRQSSFALLGDLTKACF, AEFMPILGTNLNPEFISVCNNATWAIGEICMQMG, QMVLNNLVEIINRPNTPKTLLENTAITIGRLGYVCP, QQFIRPWCTSLRNIRDNEEKDSAFRGICMMIGVN, IFFCDAVASWVSPKDDLRDMFYKILHGFKDQV, and ENWQQFSEQFPPLLKERLAAF. An Importin N-terminal domain is found at 31-99; the sequence is VQDKLKQLNQ…KQECLNNIGD (69 aa). Positions 344–363 are disordered; the sequence is TLTHEAERPDSSEDAEDDDD. Lysine 852 is modified (N6-acetyllysine).

Belongs to the importin beta family. Importin beta-2 subfamily.

It localises to the cytoplasm. The protein localises to the nucleus. Its function is as follows. Probably functions in nuclear protein import as nuclear transport receptor. Serves as receptor for nuclear localization signals (NLS) in cargo substrates. Is thought to mediate docking of the importin/substrate complex to the nuclear pore complex (NPC) through binding to nucleoporin and the complex is subsequently translocated through the pore by an energy requiring, Ran-dependent mechanism. At the nucleoplasmic side of the NPC, Ran binds to the importin, the importin/substrate complex dissociates and importin is re-exported from the nucleus to the cytoplasm where GTP hydrolysis releases Ran. The directionality of nuclear import is thought to be conferred by an asymmetric distribution of the GTP- and GDP-bound forms of Ran between the cytoplasm and nucleus. The protein is Transportin-2 (Tnpo2) of Mus musculus (Mouse).